We begin with the raw amino-acid sequence, 69 residues long: Large ribosomal subunit protein bL31 (69 aa).

The protein belongs to the bacterial ribosomal protein bL31 family. Type A subfamily. Part of the 50S ribosomal subunit.

In terms of biological role, binds the 23S rRNA. This chain is Large ribosomal subunit protein bL31, found in Magnetococcus marinus (strain ATCC BAA-1437 / JCM 17883 / MC-1).